A 209-amino-acid chain; its full sequence is V-type ATP synthase subunit D (209 aa).

It belongs to the V-ATPase D subunit family.

Functionally, produces ATP from ADP in the presence of a proton gradient across the membrane. This chain is V-type ATP synthase subunit D, found in Anaeromyxobacter dehalogenans (strain 2CP-C).